Consider the following 117-residue polypeptide: Large ribosomal subunit protein uL18 (117 aa).

Belongs to the universal ribosomal protein uL18 family. Part of the 50S ribosomal subunit; part of the 5S rRNA/L5/L18/L25 subcomplex. Contacts the 5S and 23S rRNAs.

This is one of the proteins that bind and probably mediate the attachment of the 5S RNA into the large ribosomal subunit, where it forms part of the central protuberance. The chain is Large ribosomal subunit protein uL18 from Cronobacter sakazakii (strain ATCC BAA-894) (Enterobacter sakazakii).